Consider the following 497-residue polypeptide: Ankyrin repeat domain-containing protein 53 (497 aa).

A compositionally biased stretch (basic residues) spans 1-10 (MRRPSRRRSK). Residues 1 to 65 (MRRPSRRRSK…VSSPNSESSQ (65 aa)) form a disordered region. Low complexity predominate over residues 12-27 (STPPRSHTTPRRTGPS). Positions 28–39 (DSRRRPGTKEQP) are enriched in basic and acidic residues. 3 ANK repeats span residues 110 to 140 (KGFT…PVDL), 144 to 177 (KGQT…AINS), and 181 to 210 (NGST…NVHA). A coiled-coil region spans residues 239 to 264 (WKHDKKVLAQEMEKLRTLKEKLTILE).

Interacts with PSRC1; recruited by PSRC1 to the spindle during mitosis. Post-translationally, phosphorylated during mitosis.

The protein localises to the cytoplasm. Its subcellular location is the cytoskeleton. The protein resides in the spindle. It localises to the spindle pole. Functionally, required for normal progression through mitosis. Involved in chromosome alignment and cytokinesis via regulation of microtubules polymerization. This is Ankyrin repeat domain-containing protein 53 (Ankrd53) from Mus musculus (Mouse).